The primary structure comprises 220 residues: Thiamine-phosphate synthase (220 aa).

4-amino-2-methyl-5-(diphosphooxymethyl)pyrimidine is bound by residues 46–50 (QFREK) and asparagine 83. Residues aspartate 84 and aspartate 103 each contribute to the Mg(2+) site. A 4-amino-2-methyl-5-(diphosphooxymethyl)pyrimidine-binding site is contributed by serine 122. 149-151 (TNS) lines the 2-[(2R,5Z)-2-carboxy-4-methylthiazol-5(2H)-ylidene]ethyl phosphate pocket. Lysine 152 contacts 4-amino-2-methyl-5-(diphosphooxymethyl)pyrimidine. 2-[(2R,5Z)-2-carboxy-4-methylthiazol-5(2H)-ylidene]ethyl phosphate-binding positions include glycine 181 and 201–202 (IS).

It belongs to the thiamine-phosphate synthase family. Requires Mg(2+) as cofactor.

The enzyme catalyses 2-[(2R,5Z)-2-carboxy-4-methylthiazol-5(2H)-ylidene]ethyl phosphate + 4-amino-2-methyl-5-(diphosphooxymethyl)pyrimidine + 2 H(+) = thiamine phosphate + CO2 + diphosphate. The catalysed reaction is 2-(2-carboxy-4-methylthiazol-5-yl)ethyl phosphate + 4-amino-2-methyl-5-(diphosphooxymethyl)pyrimidine + 2 H(+) = thiamine phosphate + CO2 + diphosphate. It catalyses the reaction 4-methyl-5-(2-phosphooxyethyl)-thiazole + 4-amino-2-methyl-5-(diphosphooxymethyl)pyrimidine + H(+) = thiamine phosphate + diphosphate. It participates in cofactor biosynthesis; thiamine diphosphate biosynthesis; thiamine phosphate from 4-amino-2-methyl-5-diphosphomethylpyrimidine and 4-methyl-5-(2-phosphoethyl)-thiazole: step 1/1. Condenses 4-methyl-5-(beta-hydroxyethyl)thiazole monophosphate (THZ-P) and 2-methyl-4-amino-5-hydroxymethyl pyrimidine pyrophosphate (HMP-PP) to form thiamine monophosphate (TMP). The protein is Thiamine-phosphate synthase of Mannheimia succiniciproducens (strain KCTC 0769BP / MBEL55E).